A 357-amino-acid chain; its full sequence is Fluoren-9-ol dehydrogenase (357 aa).

NADP(+) is bound by residues 36–67 and aspartate 87; that span reads VTGG…TWDD. Residue tyrosine 198 is the Proton acceptor of the active site. Lysine 202 serves as a coordination point for NADP(+).

The protein belongs to the short-chain dehydrogenases/reductases (SDR) family.

It catalyses the reaction 9H-fluoren-9-ol + NADP(+) = 9H-fluoren-9-one + NADPH + H(+). The catalysed reaction is 9H-fluoren-9-ol + NAD(+) = 9H-fluoren-9-one + NADH + H(+). Its pathway is aromatic compound metabolism. In terms of biological role, catalyzes the dehydrogenation of both 9-fluorenol and 1,1a-dihydroxy-1-hydro-9-fluorenone to produce 9-fluorenone and 2'-carboxy-2,3- dihydroxybiphenyl, respectively. The chain is Fluoren-9-ol dehydrogenase from Terrabacter sp. (strain DBF63).